A 146-amino-acid polypeptide reads, in one-letter code: Large ribosomal subunit protein uL15 (146 aa).

Residues 1–13 show a composition bias toward basic and acidic residues; that stretch reads MKLHELKPAEGSR. The disordered stretch occupies residues 1–60; it reads MKLHELKPAEGSRKQRNRVGRGIGSGNGKTAGKGHKGQNARSGGGVRPGFEGGQNPLFRR. 2 stretches are compositionally biased toward gly residues: residues 21–31 and 42–52; these read RGIGSGNGKTA and SGGGVRPGFEG.

This sequence belongs to the universal ribosomal protein uL15 family. Part of the 50S ribosomal subunit.

Its function is as follows. Binds to the 23S rRNA. The protein is Large ribosomal subunit protein uL15 of Lysinibacillus sphaericus (strain C3-41).